The sequence spans 139 residues: D-ribose pyranase (139 aa).

The active-site Proton donor is the H20. Residues D28, H106, and 128–130 (YAN) each bind substrate.

Belongs to the RbsD / FucU family. RbsD subfamily. In terms of assembly, homodecamer.

The protein resides in the cytoplasm. The enzyme catalyses beta-D-ribopyranose = beta-D-ribofuranose. It functions in the pathway carbohydrate metabolism; D-ribose degradation; D-ribose 5-phosphate from beta-D-ribopyranose: step 1/2. Catalyzes the interconversion of beta-pyran and beta-furan forms of D-ribose. The polypeptide is D-ribose pyranase (Haemophilus influenzae (strain 86-028NP)).